We begin with the raw amino-acid sequence, 231 residues long: MTQDELKRLVGQAAADYVIQNVPEGAVIGVGTGSTANCFIDALAAVKSRYRGAVSSSIATTERLKSHGIKVFDLNEIESLQVYVDGADEIDAGGAMIKGGGGALTREKIVASVADTFVCIADASKRVPVLGAFPLPIEVVPMARTAIGRRVTALGGVPVLRVTKDGAPYITDNGNEIIDVKGLQIADPRGFEAQVNAWPGVVTVGLFAERGANLCLLGTENGVETIVYPAG.

Substrate-binding positions include 32-35 (TGST), 85-88 (DGAD), and 98-101 (KGGG). The active-site Proton acceptor is the E107. K125 lines the substrate pocket.

Belongs to the ribose 5-phosphate isomerase family. Homodimer.

The catalysed reaction is aldehydo-D-ribose 5-phosphate = D-ribulose 5-phosphate. Its pathway is carbohydrate degradation; pentose phosphate pathway; D-ribose 5-phosphate from D-ribulose 5-phosphate (non-oxidative stage): step 1/1. Its function is as follows. Catalyzes the reversible conversion of ribose-5-phosphate to ribulose 5-phosphate. The sequence is that of Ribose-5-phosphate isomerase A from Burkholderia orbicola (strain MC0-3).